The following is a 585-amino-acid chain: Mitochondrial translation ATP-dependent RNA helicase mrh5 (585 aa).

The short motif at 87–117 (PKFHELPLNQNILDGLSTNFAEYKNSTPLQQ) is the Q motif element. The Helicase ATP-binding domain maps to 121–351 (NALMKSGVSF…SRYITDQLGI (231 aa)). 134–141 (GWNGSGKS) contributes to the ATP binding site. A DEAD box motif is present at residues 261 to 264 (DESD). The Helicase C-terminal domain occupies 390 to 584 (NLPYEFVRFN…PKSYEFDDEH (195 aa)).

Belongs to the DEAD box helicase family. As to quaternary structure, component of the MRH5C complex, composed of mrh5, ppr4, mtf2, and sls1. Proteins mtf2 and sls1 form a subcomplex that serves as a scaffold to bring mrh5 and ppr4 together. The MRH5C complex associates with the small subunit of the mitochondrial ribosome.

It localises to the mitochondrion. The catalysed reaction is ATP + H2O = ADP + phosphate + H(+). Its function is as follows. Translation activation factor that as part of the MRH5C complex specifically recruits cox1 mRNA to the mitochondrial ribosome for translation initiation. The polypeptide is Mitochondrial translation ATP-dependent RNA helicase mrh5 (Schizosaccharomyces pombe (strain 972 / ATCC 24843) (Fission yeast)).